A 379-amino-acid polypeptide reads, in one-letter code: Thiosulfate/3-mercaptopyruvate sulfurtransferase 1, mitochondrial (379 aa).

A mitochondrion-targeting transit peptide spans 1–56 (MASTLFSRTFLAASHRLITPSLPQKIFNPATFLSRSLHSQLGSASTAYKSTTWARR). Position 57 is an N-acetylalanine (Ala-57). 2 Rhodanese domains span residues 91–208 (REPD…DVES) and 259–373 (EDPT…LPIE). The Cysteine persulfide intermediate role is filled by Cys-333.

As to expression, expressed in roots, rosette and cauline leaves, stems, flowers and siliques.

The protein resides in the mitochondrion. The enzyme catalyses thiosulfate + hydrogen cyanide = thiocyanate + sulfite + 2 H(+). The catalysed reaction is 2-oxo-3-sulfanylpropanoate + [thioredoxin]-dithiol = [thioredoxin]-disulfide + hydrogen sulfide + pyruvate + H(+). Functionally, catalyzes the transfer of a sulfur ion from a donor to cyanide or to other thiol compounds. Substrate preference is 3-mercaptopyruvate &gt; thiosulfate. Involved in embryo and seed development. The protein is Thiosulfate/3-mercaptopyruvate sulfurtransferase 1, mitochondrial (STR1) of Arabidopsis thaliana (Mouse-ear cress).